A 105-amino-acid polypeptide reads, in one-letter code: Nitrogenase-stabilizing/protective protein NifW 1 (105 aa).

This sequence belongs to the NifW family. In terms of assembly, homotrimer; associates with NifD.

In terms of biological role, may protect the nitrogenase Fe-Mo protein from oxidative damage. The sequence is that of Nitrogenase-stabilizing/protective protein NifW 1 from Trichormus variabilis (strain ATCC 29413 / PCC 7937) (Anabaena variabilis).